The sequence spans 347 residues: Phenylalanine--tRNA ligase alpha subunit (347 aa).

Position 265 (glutamate 265) interacts with Mg(2+).

Belongs to the class-II aminoacyl-tRNA synthetase family. Phe-tRNA synthetase alpha subunit type 1 subfamily. In terms of assembly, tetramer of two alpha and two beta subunits. Mg(2+) serves as cofactor.

The protein localises to the cytoplasm. It catalyses the reaction tRNA(Phe) + L-phenylalanine + ATP = L-phenylalanyl-tRNA(Phe) + AMP + diphosphate + H(+). This is Phenylalanine--tRNA ligase alpha subunit from Wolbachia sp. subsp. Brugia malayi (strain TRS).